The chain runs to 324 residues: Acetyl-coenzyme A carboxylase carboxyl transferase subunit alpha (324 aa).

In terms of domain architecture, CoA carboxyltransferase C-terminal spans R41–K291.

The protein belongs to the AccA family. In terms of assembly, acetyl-CoA carboxylase is a heterohexamer composed of biotin carboxyl carrier protein (AccB), biotin carboxylase (AccC) and two subunits each of ACCase subunit alpha (AccA) and ACCase subunit beta (AccD).

It is found in the cytoplasm. It carries out the reaction N(6)-carboxybiotinyl-L-lysyl-[protein] + acetyl-CoA = N(6)-biotinyl-L-lysyl-[protein] + malonyl-CoA. The protein operates within lipid metabolism; malonyl-CoA biosynthesis; malonyl-CoA from acetyl-CoA: step 1/1. Its function is as follows. Component of the acetyl coenzyme A carboxylase (ACC) complex. First, biotin carboxylase catalyzes the carboxylation of biotin on its carrier protein (BCCP) and then the CO(2) group is transferred by the carboxyltransferase to acetyl-CoA to form malonyl-CoA. In Chlamydia muridarum (strain MoPn / Nigg), this protein is Acetyl-coenzyme A carboxylase carboxyl transferase subunit alpha.